The following is a 290-amino-acid chain: Fructose-1,6-bisphosphatase class 1 (290 aa).

4 residues coordinate Mg(2+): Glu-78, Asp-96, Leu-98, and Asp-99. Substrate contacts are provided by residues 99–102 (DGSS), Tyr-201, and Lys-226. Position 232 (Glu-232) interacts with Mg(2+).

This sequence belongs to the FBPase class 1 family. In terms of assembly, homotetramer. Mg(2+) serves as cofactor.

Its subcellular location is the cytoplasm. It carries out the reaction beta-D-fructose 1,6-bisphosphate + H2O = beta-D-fructose 6-phosphate + phosphate. Its pathway is carbohydrate biosynthesis; gluconeogenesis. This Helicobacter pylori (strain ATCC 700392 / 26695) (Campylobacter pylori) protein is Fructose-1,6-bisphosphatase class 1.